Consider the following 540-residue polypeptide: tRNA-2-methylthio-N(6)-dimethylallyladenosine synthase (540 aa).

In terms of domain architecture, MTTase N-terminal spans 4–120; it reads RSYEVRTFGC…LPVLLERARH (117 aa). [4Fe-4S] cluster contacts are provided by Cys13, Cys49, Cys83, Cys157, Cys161, and Cys164. The region spanning 143–374 is the Radical SAM core domain; it reads RASHHSAWVS…ALQDEISWAE (232 aa). Residues 376 to 468 form the TRAM domain; that stretch reads RALVGRRVEV…PHHLTADGPL (93 aa). The segment at 480–540 is disordered; that stretch reads WALGRDGDGG…ADACCTPVRR (61 aa). Low complexity-rich tracts occupy residues 492–502 and 520–533; these read AAAQQPADGRP and GPASADAASAGADA.

This sequence belongs to the methylthiotransferase family. MiaB subfamily. In terms of assembly, monomer. Requires [4Fe-4S] cluster as cofactor.

It is found in the cytoplasm. The enzyme catalyses N(6)-dimethylallyladenosine(37) in tRNA + (sulfur carrier)-SH + AH2 + 2 S-adenosyl-L-methionine = 2-methylsulfanyl-N(6)-dimethylallyladenosine(37) in tRNA + (sulfur carrier)-H + 5'-deoxyadenosine + L-methionine + A + S-adenosyl-L-homocysteine + 2 H(+). Its function is as follows. Catalyzes the methylthiolation of N6-(dimethylallyl)adenosine (i(6)A), leading to the formation of 2-methylthio-N6-(dimethylallyl)adenosine (ms(2)i(6)A) at position 37 in tRNAs that read codons beginning with uridine. The protein is tRNA-2-methylthio-N(6)-dimethylallyladenosine synthase of Frankia casuarinae (strain DSM 45818 / CECT 9043 / HFP020203 / CcI3).